Here is a 234-residue protein sequence, read N- to C-terminus: LexA repressor (234 aa).

The tract at residues 1-29 (MSDAANPEGHKRSLPGRPPGIRADSSGLT) is disordered. The segment at residues 52–72 (MREIGQAVGLSSTSSVAHQLM) is a DNA-binding region (H-T-H motif). Residues 90–109 (YEVRGSDQAASVQPTDTAGK) are disordered. Residues Ser158 and Lys195 each act as for autocatalytic cleavage activity in the active site.

It belongs to the peptidase S24 family. In terms of assembly, homodimer.

It catalyses the reaction Hydrolysis of Ala-|-Gly bond in repressor LexA.. In terms of biological role, represses a number of genes involved in the response to DNA damage (SOS response), including recA and lexA. In the presence of single-stranded DNA, RecA interacts with LexA causing an autocatalytic cleavage which disrupts the DNA-binding part of LexA, leading to derepression of the SOS regulon and eventually DNA repair. This is LexA repressor from Streptomyces coelicolor (strain ATCC BAA-471 / A3(2) / M145).